We begin with the raw amino-acid sequence, 273 residues long: Glutamate 5-kinase (273 aa).

Lysine 15 contributes to the ATP binding site. The substrate site is built by serine 55, aspartate 142, and asparagine 158. ATP contacts are provided by residues 178-179 (SD) and 220-226 (TGGMLSK).

The protein belongs to the glutamate 5-kinase family.

It localises to the cytoplasm. It carries out the reaction L-glutamate + ATP = L-glutamyl 5-phosphate + ADP. Its pathway is amino-acid biosynthesis; L-proline biosynthesis; L-glutamate 5-semialdehyde from L-glutamate: step 1/2. Functionally, catalyzes the transfer of a phosphate group to glutamate to form L-glutamate 5-phosphate. This Streptococcus pyogenes serotype M2 (strain MGAS10270) protein is Glutamate 5-kinase.